The primary structure comprises 171 residues: Crossover junction endodeoxyribonuclease RuvC (171 aa).

Active-site residues include Asp-7, Glu-66, and Asp-138. Positions 7, 66, and 138 each coordinate Mg(2+).

This sequence belongs to the RuvC family. Homodimer which binds Holliday junction (HJ) DNA. The HJ becomes 2-fold symmetrical on binding to RuvC with unstacked arms; it has a different conformation from HJ DNA in complex with RuvA. In the full resolvosome a probable DNA-RuvA(4)-RuvB(12)-RuvC(2) complex forms which resolves the HJ. Requires Mg(2+) as cofactor.

The protein localises to the cytoplasm. It carries out the reaction Endonucleolytic cleavage at a junction such as a reciprocal single-stranded crossover between two homologous DNA duplexes (Holliday junction).. Functionally, the RuvA-RuvB-RuvC complex processes Holliday junction (HJ) DNA during genetic recombination and DNA repair. Endonuclease that resolves HJ intermediates. Cleaves cruciform DNA by making single-stranded nicks across the HJ at symmetrical positions within the homologous arms, yielding a 5'-phosphate and a 3'-hydroxyl group; requires a central core of homology in the junction. The consensus cleavage sequence is 5'-(A/T)TT(C/G)-3'. Cleavage occurs on the 3'-side of the TT dinucleotide at the point of strand exchange. HJ branch migration catalyzed by RuvA-RuvB allows RuvC to scan DNA until it finds its consensus sequence, where it cleaves and resolves the cruciform DNA. The sequence is that of Crossover junction endodeoxyribonuclease RuvC from Francisella philomiragia subsp. philomiragia (strain ATCC 25017 / CCUG 19701 / FSC 153 / O#319-036).